Consider the following 115-residue polypeptide: Aspartate 1-decarboxylase (115 aa).

The Schiff-base intermediate with substrate; via pyruvic acid role is filled by Ser25. Position 25 is a pyruvic acid (Ser) (Ser25). Thr57 contacts substrate. Catalysis depends on Tyr58, which acts as the Proton donor. 73-75 (GAA) is a substrate binding site.

Belongs to the PanD family. In terms of assembly, heterooctamer of four alpha and four beta subunits. It depends on pyruvate as a cofactor. In terms of processing, is synthesized initially as an inactive proenzyme, which is activated by self-cleavage at a specific serine bond to produce a beta-subunit with a hydroxyl group at its C-terminus and an alpha-subunit with a pyruvoyl group at its N-terminus.

Its subcellular location is the cytoplasm. The catalysed reaction is L-aspartate + H(+) = beta-alanine + CO2. It functions in the pathway cofactor biosynthesis; (R)-pantothenate biosynthesis; beta-alanine from L-aspartate: step 1/1. In terms of biological role, catalyzes the pyruvoyl-dependent decarboxylation of aspartate to produce beta-alanine. The polypeptide is Aspartate 1-decarboxylase (Kosmotoga olearia (strain ATCC BAA-1733 / DSM 21960 / TBF 19.5.1)).